Reading from the N-terminus, the 140-residue chain is Large ribosomal subunit protein uL14 (140 aa).

This sequence belongs to the universal ribosomal protein uL14 family. In terms of assembly, component of the large ribosomal subunit.

The protein localises to the cytoplasm. Functionally, component of the large ribosomal subunit. The ribosome is a large ribonucleoprotein complex responsible for the synthesis of proteins in the cell. In Danio rerio (Zebrafish), this protein is Large ribosomal subunit protein uL14 (rpl23).